Reading from the N-terminus, the 150-residue chain is Ribonuclease K6 (150 aa).

The first 23 residues, 1–23, serve as a signal peptide directing secretion; the sequence is MVLCFPLLLLLLVLWGPVCPLHA. H38 serves as the catalytic Proton acceptor. Cystine bridges form between C46–C104, C60–C114, C78–C129, and C85–C92. Residues 61–65 and K86 each bind substrate; that span reads KHQNT. N-linked (GlcNAc...) asparagine glycosylation is present at N100. R105 is a substrate binding site. The active-site Proton donor is the H145.

The protein belongs to the pancreatic ribonuclease family. As to quaternary structure, interacts (via N-terminus) with bacterial lipopolysaccharide (LPS).

The protein resides in the secreted. The protein localises to the lysosome. It is found in the cytoplasmic granule. Functionally, ribonuclease which shows a preference for the pyrimidines uridine and cytosine. Has potent antibacterial activity against a range of Gram-positive and Gram-negative bacteria, including P.aeruginosa, A.baumanii, M.luteus, S.aureus, E.faecalis, E.faecium, S.saprophyticus and E.coli. Causes loss of bacterial membrane integrity, and also promotes agglutination of Gram-negative bacteria. Probably contributes to urinary tract sterility. Bactericidal activity is independent of RNase activity. The sequence is that of Ribonuclease K6 (RNASE6) from Pan troglodytes (Chimpanzee).